A 328-amino-acid polypeptide reads, in one-letter code: MTGNAGEWCLMESDPGVFTELIKGFGCRGAQVEEIWSLEPENFEKLKPVHGLIFLFKWQPGEEPAGSVVQDSRLDTIFFAKQVINNACATQAIVSVLLNCTHQDVHLGETLSEFKEFSQSFDAAMKGLALSNSDVIRQVHNSFARQQMFEFDAKTAAKEEDAFHFVSYVPVNGRLYELDGLREGPIDLGACNQDDWISAVRPVIEKRIQKYSEGEIRFNLMAIVSDRKMIYEQKIAELQRQLAEEPMDTDQGSNMLSAIQSEVAKNQMLIEEEVQKLKRYKIENIRRKHNYLPFIMELLKTLAEHQQLIPLVEKAKEKQNAKKAQETK.

A UCH catalytic domain is found at 7–225 (EWCLMESDPG…IRFNLMAIVS (219 aa)). K47 is subject to N6-succinyllysine. The active-site Nucleophile is the C88. An N6-acetyllysine modification is found at K158. The Proton donor role is filled by H164. K288 carries the N6-succinyllysine modification. In terms of domain architecture, ULD spans 290–318 (NYLPFIMELLKTLAEHQQLIPLVEKAKEK). The segment at 312–328 (VEKAKEKQNAKKAQETK) is interaction with ADRM1.

This sequence belongs to the peptidase C12 family. As to quaternary structure, component of the 19S (PA700) regulatory complex of the 26S proteasome. Interacts with ADRM1 and NFRKB. Component of the INO80 complex; specifically part of a complex module associated with N-terminus of INO80.

Its subcellular location is the cytoplasm. It localises to the nucleus. It catalyses the reaction Thiol-dependent hydrolysis of ester, thioester, amide, peptide and isopeptide bonds formed by the C-terminal Gly of ubiquitin (a 76-residue protein attached to proteins as an intracellular targeting signal).. Its activity is regulated as follows. Activated by ADRM1. Inhibited by interaction with NFRKB. Protease that specifically cleaves 'Lys-48'-linked polyubiquitin chains. Deubiquitinating enzyme associated with the 19S regulatory subunit of the 26S proteasome. Putative regulatory component of the INO80 complex; however is inactive in the INO80 complex and is activated by a transient interaction of the INO80 complex with the proteasome via ADRM1. In Bos taurus (Bovine), this protein is Ubiquitin carboxyl-terminal hydrolase isozyme L5 (UCHL5).